Here is a 142-residue protein sequence, read N- to C-terminus: Large ribosomal subunit protein uL11 (142 aa).

Belongs to the universal ribosomal protein uL11 family. Part of the ribosomal stalk of the 50S ribosomal subunit. Interacts with L10 and the large rRNA to form the base of the stalk. L10 forms an elongated spine to which L12 dimers bind in a sequential fashion forming a multimeric L10(L12)X complex. In terms of processing, one or more lysine residues are methylated.

Forms part of the ribosomal stalk which helps the ribosome interact with GTP-bound translation factors. The polypeptide is Large ribosomal subunit protein uL11 (Hahella chejuensis (strain KCTC 2396)).